A 596-amino-acid chain; its full sequence is Putative terpenoid synthase 5 (596 aa).

4 residues coordinate Mg(2+): Asp349, Asp353, Asn481, and Asp489. The DDXXD motif signature appears at 349–353 (DDTCD).

This sequence belongs to the terpene synthase family. Tpsa subfamily. The cofactor is Mg(2+). Requires Mn(2+) as cofactor.

The protein resides in the cytoplasm. It participates in secondary metabolite biosynthesis; terpenoid biosynthesis. This Arabidopsis thaliana (Mouse-ear cress) protein is Putative terpenoid synthase 5 (TPS05).